Reading from the N-terminus, the 336-residue chain is Isopentenyl-diphosphate delta-isomerase (336 aa).

5–6 (RK) contributes to the substrate binding site. FMN contacts are provided by residues 60–62 (AMT), serine 90, and asparagine 117. A substrate-binding site is contributed by glutamine 147. Glutamate 148 is a Mg(2+) binding site. FMN is bound by residues lysine 179, serine 204, threonine 209, 253–255 (GVR), and 274–275 (SR).

The protein belongs to the IPP isomerase type 2 family. Homooctamer. Dimer of tetramers. FMN serves as cofactor. Requires NADPH as cofactor. The cofactor is Mg(2+).

It is found in the cytoplasm. It carries out the reaction isopentenyl diphosphate = dimethylallyl diphosphate. In terms of biological role, involved in the biosynthesis of isoprenoids. Catalyzes the 1,3-allylic rearrangement of the homoallylic substrate isopentenyl (IPP) to its allylic isomer, dimethylallyl diphosphate (DMAPP). This Streptococcus pneumoniae (strain ATCC BAA-255 / R6) protein is Isopentenyl-diphosphate delta-isomerase.